The sequence spans 103 residues: Large ribosomal subunit protein bL21 (103 aa).

It belongs to the bacterial ribosomal protein bL21 family. As to quaternary structure, part of the 50S ribosomal subunit. Contacts protein L20.

Its function is as follows. This protein binds to 23S rRNA in the presence of protein L20. This is Large ribosomal subunit protein bL21 from Borreliella afzelii (strain PKo) (Borrelia afzelii).